The chain runs to 61 residues: Small ribosomal subunit protein uS14 (61 aa).

Cys-24, Cys-27, Cys-40, and Cys-43 together coordinate Zn(2+).

The protein belongs to the universal ribosomal protein uS14 family. Zinc-binding uS14 subfamily. Part of the 30S ribosomal subunit. Contacts proteins S3 and S10. It depends on Zn(2+) as a cofactor.

Functionally, binds 16S rRNA, required for the assembly of 30S particles and may also be responsible for determining the conformation of the 16S rRNA at the A site. This Mycoplasma capricolum subsp. capricolum (strain California kid / ATCC 27343 / NCTC 10154) protein is Small ribosomal subunit protein uS14.